The following is a 260-amino-acid chain: Ribosomal RNA small subunit methyltransferase J (260 aa).

Residues 125–126 and Asp-179 contribute to the S-adenosyl-L-methionine site; that span reads ER.

Belongs to the methyltransferase superfamily. RsmJ family.

It is found in the cytoplasm. The catalysed reaction is guanosine(1516) in 16S rRNA + S-adenosyl-L-methionine = N(2)-methylguanosine(1516) in 16S rRNA + S-adenosyl-L-homocysteine + H(+). Its function is as follows. Specifically methylates the guanosine in position 1516 of 16S rRNA. The polypeptide is Ribosomal RNA small subunit methyltransferase J (Pseudomonas fluorescens (strain Pf0-1)).